Here is a 71-residue protein sequence, read N- to C-terminus: Large ribosomal subunit protein uL29 (71 aa).

This sequence belongs to the universal ribosomal protein uL29 family.

The sequence is that of Large ribosomal subunit protein uL29 (rpl29) from Aeropyrum pernix (strain ATCC 700893 / DSM 11879 / JCM 9820 / NBRC 100138 / K1).